The sequence spans 339 residues: Glycerol-3-phosphate dehydrogenase [NAD(P)+] (339 aa).

NADPH is bound by residues Ser11, Trp12, and Lys109. Residues Lys109, Gly140, and Ser142 each contribute to the sn-glycerol 3-phosphate site. Residue Ala144 participates in NADPH binding. Sn-glycerol 3-phosphate contacts are provided by Lys195, Asp249, Ser259, Arg260, and Asn261. Lys195 (proton acceptor) is an active-site residue. An NADPH-binding site is contributed by Arg260. Residues Val284 and Glu286 each coordinate NADPH.

It belongs to the NAD-dependent glycerol-3-phosphate dehydrogenase family.

It is found in the cytoplasm. The catalysed reaction is sn-glycerol 3-phosphate + NAD(+) = dihydroxyacetone phosphate + NADH + H(+). It carries out the reaction sn-glycerol 3-phosphate + NADP(+) = dihydroxyacetone phosphate + NADPH + H(+). Its pathway is membrane lipid metabolism; glycerophospholipid metabolism. Catalyzes the reduction of the glycolytic intermediate dihydroxyacetone phosphate (DHAP) to sn-glycerol 3-phosphate (G3P), the key precursor for phospholipid synthesis. This is Glycerol-3-phosphate dehydrogenase [NAD(P)+] from Lactobacillus acidophilus (strain ATCC 700396 / NCK56 / N2 / NCFM).